Reading from the N-terminus, the 226-residue chain is LexA repressor (226 aa).

Residues 28 to 48 constitute a DNA-binding region (H-T-H motif); the sequence is RAEICQSLGFRSPNAAESHLR. Catalysis depends on for autocatalytic cleavage activity residues Ser-133 and Lys-170.

Belongs to the peptidase S24 family. As to quaternary structure, homodimer.

It carries out the reaction Hydrolysis of Ala-|-Gly bond in repressor LexA.. Represses a number of genes involved in the response to DNA damage (SOS response), including recA and lexA. In the presence of single-stranded DNA, RecA interacts with LexA causing an autocatalytic cleavage which disrupts the DNA-binding part of LexA, leading to derepression of the SOS regulon and eventually DNA repair. The protein is LexA repressor of Halorhodospira halophila (strain DSM 244 / SL1) (Ectothiorhodospira halophila (strain DSM 244 / SL1)).